Here is a 143-residue protein sequence, read N- to C-terminus: Hemoglobin subunit alpha (143 aa).

In terms of domain architecture, Globin spans 3 to 143; the sequence is KLSGEDKANV…TMRLCISKYR (141 aa). His-60 contacts O2. Position 89 (His-89) interacts with heme b.

Belongs to the globin family. In terms of assembly, heterotetramer of two alpha chains and two beta chains. Red blood cells.

In terms of biological role, involved in oxygen transport from the lung to the various peripheral tissues. This is Hemoglobin subunit alpha (HBA) from Ambystoma mexicanum (Axolotl).